We begin with the raw amino-acid sequence, 50 residues long: uncharacterized protein (50 aa).

This is an uncharacterized protein from Dryophytes versicolor (chameleon treefrog).